The chain runs to 416 residues: Serine hydroxymethyltransferase (416 aa).

(6S)-5,6,7,8-tetrahydrofolate-binding positions include L119 and 123-125 (GHL). Residue K228 is modified to N6-(pyridoxal phosphate)lysine. E243 provides a ligand contact to (6S)-5,6,7,8-tetrahydrofolate.

The protein belongs to the SHMT family. In terms of assembly, homodimer. Requires pyridoxal 5'-phosphate as cofactor.

The protein localises to the cytoplasm. It carries out the reaction (6R)-5,10-methylene-5,6,7,8-tetrahydrofolate + glycine + H2O = (6S)-5,6,7,8-tetrahydrofolate + L-serine. It participates in one-carbon metabolism; tetrahydrofolate interconversion. The protein operates within amino-acid biosynthesis; glycine biosynthesis; glycine from L-serine: step 1/1. Functionally, catalyzes the reversible interconversion of serine and glycine with tetrahydrofolate (THF) serving as the one-carbon carrier. This reaction serves as the major source of one-carbon groups required for the biosynthesis of purines, thymidylate, methionine, and other important biomolecules. Also exhibits THF-independent aldolase activity toward beta-hydroxyamino acids, producing glycine and aldehydes, via a retro-aldol mechanism. The sequence is that of Serine hydroxymethyltransferase from Desulforapulum autotrophicum (strain ATCC 43914 / DSM 3382 / VKM B-1955 / HRM2) (Desulfobacterium autotrophicum).